A 366-amino-acid polypeptide reads, in one-letter code: UPF0324 membrane protein RSc1111 (366 aa).

8 helical membrane passes run 21-43 (LAGAGLLAGCAGVAMIAGATAWA), 103-125 (LGASGVVIPLLVLAATMLSGAWV), 137-159 (AVLVAAGSAVCGAAAVLAVAPAV), 169-191 (AIASVVLFGTAGIFLYPWLYALA), 198-220 (VAPAHFGVYIGSTLHEVAQVIAA), 240-262 (VLALAPLLVVLACTMPAEGLVLE), 283-305 (WFAAGLLGVALLNSGGAIPATWH), and 343-365 (AGVLWVGLVAGGAAINAGVRWLA).

It belongs to the UPF0324 family.

It is found in the cell membrane. In Ralstonia nicotianae (strain ATCC BAA-1114 / GMI1000) (Ralstonia solanacearum), this protein is UPF0324 membrane protein RSc1111.